The following is a 366-amino-acid chain: Protein-glutamate methylesterase/protein-glutamine glutaminase (366 aa).

One can recognise a Response regulatory domain in the interval 5 to 123 (RVLVVDDSVV…SVGRSMEQVR (119 aa)). The residue at position 56 (Asp-56) is a 4-aspartylphosphate. A CheB-type methylesterase domain is found at 163–355 (PLGGHRLLVI…PEILRRLARQ (193 aa)). Active-site residues include Ser-175, His-201, and Asp-297.

Belongs to the CheB family. In terms of processing, phosphorylated by CheA. Phosphorylation of the N-terminal regulatory domain activates the methylesterase activity.

It localises to the cytoplasm. It catalyses the reaction [protein]-L-glutamate 5-O-methyl ester + H2O = L-glutamyl-[protein] + methanol + H(+). The catalysed reaction is L-glutaminyl-[protein] + H2O = L-glutamyl-[protein] + NH4(+). Functionally, involved in chemotaxis. Part of a chemotaxis signal transduction system that modulates chemotaxis in response to various stimuli. Catalyzes the demethylation of specific methylglutamate residues introduced into the chemoreceptors (methyl-accepting chemotaxis proteins or MCP) by CheR. Also mediates the irreversible deamidation of specific glutamine residues to glutamic acid. This chain is Protein-glutamate methylesterase/protein-glutamine glutaminase, found in Nocardioides sp. (strain ATCC BAA-499 / JS614).